A 335-amino-acid chain; its full sequence is Phosphate acyltransferase (335 aa).

The protein belongs to the PlsX family. Homodimer. Probably interacts with PlsY.

The protein resides in the cytoplasm. It catalyses the reaction a fatty acyl-[ACP] + phosphate = an acyl phosphate + holo-[ACP]. It participates in lipid metabolism; phospholipid metabolism. Its function is as follows. Catalyzes the reversible formation of acyl-phosphate (acyl-PO(4)) from acyl-[acyl-carrier-protein] (acyl-ACP). This enzyme utilizes acyl-ACP as fatty acyl donor, but not acyl-CoA. The sequence is that of Phosphate acyltransferase from Streptococcus equi subsp. equi (strain 4047).